The chain runs to 452 residues: L-seryl-tRNA(Sec) selenium transferase (452 aa).

An N6-(pyridoxal phosphate)lysine modification is found at lysine 285.

The protein belongs to the SelA family. The cofactor is pyridoxal 5'-phosphate.

Its subcellular location is the cytoplasm. It catalyses the reaction L-seryl-tRNA(Sec) + selenophosphate + H(+) = L-selenocysteinyl-tRNA(Sec) + phosphate. It participates in aminoacyl-tRNA biosynthesis; selenocysteinyl-tRNA(Sec) biosynthesis; selenocysteinyl-tRNA(Sec) from L-seryl-tRNA(Sec) (bacterial route): step 1/1. In terms of biological role, converts seryl-tRNA(Sec) to selenocysteinyl-tRNA(Sec) required for selenoprotein biosynthesis. The polypeptide is L-seryl-tRNA(Sec) selenium transferase (Aquifex aeolicus (strain VF5)).